A 488-amino-acid polypeptide reads, in one-letter code: Prostaglandin E2 receptor EP4 subtype (488 aa).

Topologically, residues 1-19 are extracellular; that stretch reads MSTPVANASASSMPELLNN. Asn7 carries N-linked (GlcNAc...) asparagine glycosylation. Residues 20 to 43 form a helical membrane-spanning segment; that stretch reads PVTIPAVMFIFGVVGNLVAIVVLC. At 44–55 the chain is on the cytoplasmic side; the sequence is KSRKEQKETTFY. A helical transmembrane segment spans residues 56 to 79; sequence TLVCGLAVTDLLGTLLVSPVTIAT. The Extracellular portion of the chain corresponds to 80-96; it reads YMKGQWPGGQALCDYST. An intrachain disulfide couples Cys92 to Cys170. The chain crosses the membrane as a helical span at residues 97–115; that stretch reads FILLFFGLSGLSIICAMSI. Residues 116 to 135 are Cytoplasmic-facing; sequence ERYLAINHAYFYSHYVDKRL. Residues 136-160 traverse the membrane as a helical segment; the sequence is AGLTLFAVYASNVLFCALPNMGLGR. Over 161 to 184 the chain is Extracellular; that stretch reads SRLQFPDTWCFIDWRTNVTAHAAF. N-linked (GlcNAc...) asparagine glycosylation is present at Asn177. A helical membrane pass occupies residues 185 to 211; it reads SYMYAGFSSFLILATVLCNVLVCGALL. Residues 212 to 270 are Cytoplasmic-facing; the sequence is RMHRQFMRRTSLGTEQHHAAAAAAVTSAACRGHPTASPALPRLSDFRRRRSFRRIAGAE. The helical transmembrane segment at 271-298 threads the bilayer; the sequence is IQMVILLIATSLVVLICSIPLVVRVFIN. Topologically, residues 299 to 315 are extracellular; it reads QLYQPDLVREISQNPDL. Residues 316-335 traverse the membrane as a helical segment; the sequence is QAIRIASVNPILDPWIYILL. Residues 336–488 are Cytoplasmic-facing; that stretch reads RKTVLSKAIE…ETLNLSEKCI (153 aa). Residues 358–371 show a composition bias toward basic and acidic residues; the sequence is RRDRSGQHCSDSRR. The tract at residues 358–381 is disordered; that stretch reads RRDRSGQHCSDSRRTSSAMSTHSR. The segment covering 372–381 has biased composition (polar residues); sequence TSSAMSTHSR. Residues Ser377, Ser380, Ser382, and Ser385 each carry the phosphoserine modification. The segment at 456-475 is disordered; sequence EVGGGGRAGPTPKGSSLQVT.

This sequence belongs to the G-protein coupled receptor 1 family. As to quaternary structure, interacts with FEM1A. Phosphorylation mediates agonist-mediated desensitization by promoting cytoplasmic retention. In terms of tissue distribution, highly expressed in intestine, duodenal epithelium, uterus, thymus and adrenal cortex. Lower but significant expression in whole adrenal, lung, spleen, stomach, and kidney. In this latter organ, the receptor is localized in the glomeruli and the transitional epithelium of the renal calyx.

The protein localises to the cell membrane. Functionally, receptor for prostaglandin E2 (PGE2). The activity of this receptor is mediated by G(s) proteins that stimulate adenylate cyclase. Has a relaxing effect on smooth muscle. May play an important role in regulating renal hemodynamics, intestinal epithelial transport, adrenal aldosterone secretion, and uterine function. This chain is Prostaglandin E2 receptor EP4 subtype (PTGER4), found in Oryctolagus cuniculus (Rabbit).